Here is a 210-residue protein sequence, read N- to C-terminus: Probable nicotinate-nucleotide adenylyltransferase (210 aa).

It belongs to the NadD family.

It catalyses the reaction nicotinate beta-D-ribonucleotide + ATP + H(+) = deamido-NAD(+) + diphosphate. The protein operates within cofactor biosynthesis; NAD(+) biosynthesis; deamido-NAD(+) from nicotinate D-ribonucleotide: step 1/1. Its function is as follows. Catalyzes the reversible adenylation of nicotinate mononucleotide (NaMN) to nicotinic acid adenine dinucleotide (NaAD). This is Probable nicotinate-nucleotide adenylyltransferase from Streptococcus mutans serotype c (strain ATCC 700610 / UA159).